A 993-amino-acid chain; its full sequence is MSPAMANPRVRKFNPIAFTPLPVTLITTIVYLAVLILVLVTYLVVPPAPTLEMSPRGVNLTEAWRDLQHLTGGFHPYNSRRNDDVHAWLLHRIEAIVREHSAAADDVPEVFVFDDNLSNLTYSNGGVSKSPIVGVYFESTNIIVYIRGSEDDPQNWWEWSNGKPKGKGGVLVNAHYDSVSTGYGATDDGMGVVSLLQLLRYFTIAGNKPRKGLVLLFNNGEEDYLNGARVYSQHAMSNFTHTFLNLEGAGAGGRACLFRTTDTEVTRFYKNAKHPFGSVLAGDGFKLGLIRSQTDYVVFNGVLGLRGLDVSFIAPRSRYHTDQDDARHTNVDSLWHMLSVAIATTEGLVSYTGTDFDSKTTDQDKVNSGDGTLGVWFDIFGSAFAVFRLHTLFALSVTLLVSAPLVLFITSIALSKTDRMYLFSMSKSLGGTSETVSLRGLRGLFRTPIILTVTTVITIGLAYLLEKINPYIVHSSQFAVWSMMLSVWIFVAWFLARVADFFRPSALHRAYSYTWIFIATWIMLVISTVYANQKGIAAGYFIFFYFAAVFLATWVSYLELFSLPRKGYYAHQTSRGQRRRSSSLSSRLLTPSADELPSDIGPNGAENLGDPDETDPTESTSLLRGQRTTFANYRTGGNSGVTEYTAEGEHVREAGIFGHEQSWSWTLPRWTWILQLLLLAPIVIILVGQVGLLLTTAMSQIGSDGVSTFIVYLACALLSTLLFAPLFPFIHRFTYHVPTFLLLIFIGTLIYNLVAFPFSPANRLKIFFIQEVNLDDGTNKVSLTGIQPYLTNTINAIPSAAGQTANCTQGPFGSLVRCSWSGPPPRVVKEDPGNDQTMGPYTWISYNITKTVGKNEARIKVSGRNTRACKLKFDNPVADYRISGSAVDHRLPHTSRQGVAEIRLWSRTWENTWVVDVDWHSNPVKPGESKDGDEKQDVSKNELSGKVICLWSDNNESGVIPALDEVRLYAPAWVAISKSADGLVEASHDFIIQ.

At 1–24 the chain is on the cytoplasmic side; that stretch reads MSPAMANPRVRKFNPIAFTPLPVT. Residues 25 to 45 traverse the membrane as a helical segment; that stretch reads LITTIVYLAVLILVLVTYLVV. Topologically, residues 46-391 are vacuolar; sequence PPAPTLEMSP…SAFAVFRLHT (346 aa). Residues Asn-59, Asn-116, and Asn-119 are each glycosylated (N-linked (GlcNAc...) asparagine). The Zn(2+) site is built by His-175 and Asp-187. Catalysis depends on Glu-221, which acts as the Proton acceptor. Glu-222 contacts Zn(2+). An N-linked (GlcNAc...) asparagine glycan is attached at Asn-238. Zn(2+) contacts are provided by Glu-247 and His-320. The helical transmembrane segment at 392–412 threads the bilayer; sequence LFALSVTLLVSAPLVLFITSI. Over 413 to 447 the chain is Cytoplasmic; that stretch reads ALSKTDRMYLFSMSKSLGGTSETVSLRGLRGLFRT. Residues 448–468 traverse the membrane as a helical segment; that stretch reads PIILTVTTVITIGLAYLLEKI. At 469 to 475 the chain is on the vacuolar side; that stretch reads NPYIVHS. Residues 476–496 traverse the membrane as a helical segment; it reads SQFAVWSMMLSVWIFVAWFLA. The Cytoplasmic portion of the chain corresponds to 497-509; the sequence is RVADFFRPSALHR. The helical transmembrane segment at 510-530 threads the bilayer; that stretch reads AYSYTWIFIATWIMLVISTVY. The Vacuolar portion of the chain corresponds to 531-534; sequence ANQK. A helical membrane pass occupies residues 535-555; sequence GIAAGYFIFFYFAAVFLATWV. The Cytoplasmic segment spans residues 556 to 672; the sequence is SYLELFSLPR…WSWTLPRWTW (117 aa). A disordered region spans residues 579 to 621; it reads RRSSSLSSRLLTPSADELPSDIGPNGAENLGDPDETDPTESTS. A helical transmembrane segment spans residues 673-693; it reads ILQLLLLAPIVIILVGQVGLL. The Vacuolar portion of the chain corresponds to 694 to 709; the sequence is LTTAMSQIGSDGVSTF. A helical transmembrane segment spans residues 710–730; that stretch reads IVYLACALLSTLLFAPLFPFI. Over 731–737 the chain is Cytoplasmic; the sequence is HRFTYHV. Residues 738 to 758 traverse the membrane as a helical segment; the sequence is PTFLLLIFIGTLIYNLVAFPF. Residues 759 to 993 are Vacuolar-facing; that stretch reads SPANRLKIFF…VEASHDFIIQ (235 aa). Asn-806, Asn-847, and Asn-955 each carry an N-linked (GlcNAc...) asparagine glycan.

This sequence belongs to the peptidase M28 family. Requires Zn(2+) as cofactor.

The protein localises to the vacuole membrane. In terms of biological role, may be involved in vacuolar sorting and osmoregulation. The chain is Vacuolar membrane protease from Paracoccidioides lutzii (strain ATCC MYA-826 / Pb01) (Paracoccidioides brasiliensis).